The sequence spans 353 residues: Tsukushi (353 aa).

Positions 1–17 are cleaved as a signal peptide; it reads MLCTLFLLLLALGIVQT. An LRRNT domain is found at 18 to 59; sequence TRPCFPGCQCEEETFGLFDSFSLIRVDCSSLGPHIVPVPIPL. LRR repeat units lie at residues 60–80, 86–107, 110–131, 133–154, 160–180, 186–207, 208–228, 231–253, 256–277, and 281–302; these read DTAHLDLSSNRLETVNESVLG, TLAGLDLSHNLLTSITPTAFSR, YLESLDLSHNGLAALPAEVFTS, PLSDINLSHNRLREVSISAFTT, ALHVDLSHNLIHRLLPYPARA, TIQSLNLSWNRLRAVPDLRDLP, LRYLSLDGNPLATINPGAFMG, GLTHLSLASLQGILQLPPHGFRE, GLQVLDLSGNPKLKWAGAEVFS, and LLQELDLSGSSLVPLPETLLHH. Asparagine 75 carries an N-linked (GlcNAc...) asparagine glycan. The N-linked (GlcNAc...) asparagine glycan is linked to asparagine 138. Asparagine 191 carries N-linked (GlcNAc...) asparagine glycosylation.

In terms of assembly, interacts with FZD4 (via FZ domain); competes with WNT2B for binding to FZD4, inhibiting Wnt signaling and repressing peripheral eye development. Interacts with TGFB1; the interaction contributes to regulation of the hair cycle. Interacts with netrin. Interacts with CCN2. Expressed at high levels in the liver, small intestine and placenta. Not or barely detectable in other tissues, including whole pancreas, adipose tissues, skeletal muscle, kidney, spleen, brain, lung and testis.

The protein resides in the secreted. Its function is as follows. Contributes to various developmental events and other processes such as wound healing and cholesterol homeostasis through its interactions with multiple signaling pathways. Wnt signaling inhibitor which competes with WNT2B for binding to Wnt receptor FZD4 and represses WNT2B-dependent development of the peripheral eye. Plays a role in regulating the hair cycle by controlling TGFB1 signaling. Required for the development of the anterior commissure in the brain by inhibiting neurite outgrowth. Essential for terminal differentiation of hippocampal neural stem cells. Plays a role in regulating bone elongation and bone mass by modulating growth plate chondrocyte function and overall body size. Required for development of the inner ear through its involvement in stereocilia formation in inner hair cells. Facilitates wound healing by inhibiting secretion of TGFB1 from macrophages which prevents myofibroblast differentiation, maintaining inflammatory cell quiescence. Plays a role in cholesterol homeostasis by reducing circulating high-density lipoprotein cholesterol, lowering cholesterol efflux capacity and decreasing cholesterol-to-bile acid conversion in the liver. In one study, shown to negatively regulate sympathetic innervation in brown fat, leading to reduced energy expenditure. In another study, shown not to affect brown fat thermogenic capacity, body weight gain or glucose homeostasis. The polypeptide is Tsukushi (Tsku) (Rattus norvegicus (Rat)).